A 153-amino-acid polypeptide reads, in one-letter code: Probable inactive ribonuclease-like protein 13 (153 aa).

The first 22 residues, 1 to 22 (MAPDVAWLLVLPLVFRPTLVTG), serve as a signal peptide directing secretion.

This sequence belongs to the pancreatic ribonuclease family.

The protein localises to the secreted. Its function is as follows. Does not exhibit any ribonuclease activity. This is Probable inactive ribonuclease-like protein 13 (Rnase13) from Mus musculus (Mouse).